Reading from the N-terminus, the 341-residue chain is D-aspartate oxidase (341 aa).

FAD is bound by residues Asp36, Lys37, Thr43, Ser44, Met50, Gly307, Ile311, and Ser312. Positions 339 to 341 (SNL) match the Microbody targeting signal motif.

Belongs to the DAMOX/DASOX family. In terms of assembly, monomer. Interacts with PEX5; the interaction is direct and required for localization of DDO to the peroxisome. Interacts with DAOA; the interaction is direct and increases the degradation rate of DDO. The cofactor is FAD. Post-translationally, may be S-nitrosylated. As to expression, expressed in epithelial cells of the proximal nephron tubules in the renal cortex (at protein level). In the brain, expressed in the frontal, temporal, and occipital lobes of the cortex, hippocampus, striatum, diencephalon, brainstem, cerebellum, spinal cord, plexus choroiderus and ependyma (at protein level). Expression is increased in the prefrontal cortex of schizophrenic patients. Levels are normal in the superior frontal gyrus of patients with Alzheimer's disease.

The protein resides in the peroxisome matrix. It is found in the cytoplasm. Its subcellular location is the cytosol. The catalysed reaction is D-aspartate + O2 + H2O = oxaloacetate + H2O2 + NH4(+). The enzyme catalyses D-glutamate + O2 + H2O = H2O2 + 2-oxoglutarate + NH4(+). Inhibited by the benzodiazepine olanzapine. Inhibited by aminooxyacetic acid, thiolactomycin, malonate and meso-tartrate. Clozapine, haloperidol and chlorpromazine have no effect on activity. Not inhibited by sodium, potassium, magnesium, iron, calcium, cobalt, copper, nickel, manganese or zinc ions. Not inhibited by AMP, ADP, ATP, or cAMP. Not inhibited by pyridoxal 5'-phosphate. Its function is as follows. Selectively catalyzes the oxidative deamination of acidic amino acids. Suppresses the level of D-aspartate in the brain, an amino acid that can act as an agonist for glutamate receptors. Protects the organism from the toxicity of D-amino acids. May also function in the intestine. In Homo sapiens (Human), this protein is D-aspartate oxidase (DDO).